A 329-amino-acid chain; its full sequence is uncharacterized protein (329 aa).

Residues 284 to 303 form a disordered region; the sequence is SGGGHSEAGGLNAPYDKSKS.

This is an uncharacterized protein from Methanocaldococcus jannaschii (strain ATCC 43067 / DSM 2661 / JAL-1 / JCM 10045 / NBRC 100440) (Methanococcus jannaschii).